Here is a 219-residue protein sequence, read N- to C-terminus: Cytidylate kinase (219 aa).

Position 15 to 23 (15 to 23) interacts with ATP; that stretch reads GPAASGKGT.

This sequence belongs to the cytidylate kinase family. Type 1 subfamily.

The protein resides in the cytoplasm. It carries out the reaction CMP + ATP = CDP + ADP. The catalysed reaction is dCMP + ATP = dCDP + ADP. This chain is Cytidylate kinase, found in Brucella suis biovar 1 (strain 1330).